Reading from the N-terminus, the 179-residue chain is Large ribosomal subunit protein uL6 (179 aa).

This sequence belongs to the universal ribosomal protein uL6 family. As to quaternary structure, part of the 50S ribosomal subunit.

In terms of biological role, this protein binds to the 23S rRNA, and is important in its secondary structure. It is located near the subunit interface in the base of the L7/L12 stalk, and near the tRNA binding site of the peptidyltransferase center. The sequence is that of Large ribosomal subunit protein uL6 from Legionella pneumophila (strain Paris).